The chain runs to 2058 residues: E3 ubiquitin-protein ligase ubr-1 (2058 aa).

A UBR-type zinc finger spans residues 93 to 164; it reads QICGHVFKNG…EGYACANHEK (72 aa). The tract at residues 1107–1175 is disordered; the sequence is VPEAAPAPEN…TPSEKSETVV (69 aa). Residues 1108–1119 show a composition bias toward low complexity; sequence PEAAPAPENKPA. Basic and acidic residues-rich tracts occupy residues 1123-1138 and 1153-1175; these read EEIK…EMRQ and KKIE…ETVV. The RING-type; atypical zinc finger occupies 1217–1335; it reads LTCILCQEDE…GEYQCPLCKR (119 aa). 2 disordered regions span residues 1381–1416 and 1475–1499; these read LSSE…DTAN and PAAT…ESGK. The span at 1388-1397 shows a compositional bias: basic residues; that stretch reads KKGHSRKRSH. A compositionally biased stretch (basic and acidic residues) spans 1398–1413; that stretch reads SERSLLDLEKLSKDPD. The span at 1486 to 1495 shows a compositional bias: polar residues; it reads GSSSRIPESQ. A helical membrane pass occupies residues 1695–1715; it reads ILQIDILSLAISLMMTIGWTW.

The protein belongs to the E3 ubiquitin-protein ligase UBR1-like family. In terms of assembly, interacts with ubc-1. Component of a complex containing at least ced-3, ubr-1 and possibly ate-1. Within complex interacts with ced-3 (via the p17 subunit); this interaction is required for the ced-3-mediated cleavage and subsequent degradation of the heterochronic protein lin-28. In terms of tissue distribution, expressed in pharyngeal muscles, body wall muscles and a subset of neurons throughout postembryonic development. Prominently expressed in premotor interneurons, but not expressed in ventral cord motor neurons. Weakly expressed in hypodermal seam cells.

The protein localises to the membrane. The catalysed reaction is S-ubiquitinyl-[E2 ubiquitin-conjugating enzyme]-L-cysteine + [acceptor protein]-L-lysine = [E2 ubiquitin-conjugating enzyme]-L-cysteine + N(6)-ubiquitinyl-[acceptor protein]-L-lysine.. The protein operates within protein modification; protein ubiquitination. Its function is as follows. E3 ubiquitin-protein ligase which is a component of the N-end rule pathway. Recognizes and binds to proteins bearing specific N-terminal residues that are destabilizing according to the N-end rule, leading to their ubiquitination and subsequent degradation. In complex with ced-3, required for the ced-3-mediated cleavage and subsequent degradation of the heterochronic protein lin-28 to regulate seam cell fate patterning during larval development. Negatively regulates glutamate metabolism through the aspartate aminotransferase got-1.2. Modulation of glutamate levels most likely controls locomotory behavior, in particular backwards locomotion or 'reversals'. This chain is E3 ubiquitin-protein ligase ubr-1, found in Caenorhabditis elegans.